The sequence spans 540 residues: Receptor-interacting serine/threonine-protein kinase 2 (540 aa).

In terms of domain architecture, Protein kinase spans 18-294; sequence LADLRYLSRG…KCLIELEPVL (277 aa). Residues 24–32 and lysine 47 contribute to the ATP site; that span reads LSRGASGTV. Positions 65–73 are helix alphaC; that stretch reads REAEILHKA. Residue aspartate 146 is the Proton acceptor of the active site. An activation segment (AS) region spans residues 167 to 193; sequence LSKWRMMSLSQSRSSKSAPEGGTIVYM. Serine 168 bears the Phosphoserine mark. At serine 174 the chain carries Phosphoserine; alternate. At serine 176 the chain carries Phosphoserine; by autocatalysis. Position 178 is a phosphoserine; alternate (serine 178). Phosphoserine is present on serine 180. Serine 181 carries the phosphoserine; alternate modification. Lysine 209 participates in a covalent cross-link: Glycyl lysine isopeptide (Lys-Gly) (interchain with G-Cter in ubiquitin). A disordered region spans residues 318–367; it reads SRTVHLSDKKKRELSPNIPVNSGPREESCGSSQLHKTSGSPGTSRSLSAP. Basic and acidic residues predominate over residues 322 to 331; it reads HLSDKKKREL. The span at 346–366 shows a compositional bias: polar residues; that stretch reads CGSSQLHKTSGSPGTSRSLSA. Residues serine 363 and serine 391 each carry the phosphoserine modification. In terms of domain architecture, CARD spans 432–524; it reads GIAQQWIQSK…LQPYPEILVL (93 aa). A Phosphotyrosine; by autocatalysis modification is found at tyrosine 472. Phosphoserine is present on residues serine 525, serine 527, and serine 529. Residue lysine 536 forms a Glycyl lysine isopeptide (Lys-Gly) (interchain with G-Cter in ubiquitin) linkage. The residue at position 537 (serine 537) is a Phosphoserine.

The protein belongs to the protein kinase superfamily. TKL Ser/Thr protein kinase family. In terms of assembly, interacts (via CARD domain) with NOD2 (via CARD domain). Interacts (via CARD domain) with NOD1 (via CARD domain). Homooligomer; following interaction with NOD1 or NOD2, homooligomerizes via its CARD domain and forms long filaments named RIPosomes. Found in a signaling complex consisting of at least ARHGEF2, NOD2 and RIPK2. Interacts with ARHGEF2; the interaction mediates tyrosine phosphorylation of RIPK2 by Src kinase CSK. Interacts with MAP3K4; this interaction sequesters RIPK2 from the NOD2 signaling pathway. Interacts with IKBKG/NEMO. The polyubiquitinated protein interacts with MAP3K7/TAK1; interaction is indirect and is mediated by TAB2 and TAB3 that bind to polyubiquitin chains attached to RIPK2. Binds to CFLAR/CLARP and CASP1 via their CARD domains. Binds to BIRC3/c-IAP1 and BIRC2/c-IAP2, TRAF1, TRAF2, TRAF5 and TRAF6. Interacts with NLRP10. Interacts with CARD9. Interacts with INAVA; the interaction takes place upon PRR stimulation. Interacts (via CARD domain) with NGFR (via death domain). Interacts with IRGM; promoting RIPK2 degradation. In terms of processing, polyubiquitinated via both 'Lys-63'- and 'Met-1'-linked polyubiquitin following recruitment by NOD1 or NOD2, creating docking sites for downstream effectors, triggering activation of the NF-kappa-B and MAP kinases signaling. 'Lys-63'-linked polyubiquitination by XIAP is essential for NOD2 signaling and promotes recruitment of the LUBAC complex. Also polyubiquitinated with 'Lys-63'-linked chains by PELI3, BIRC2/c-IAP1 and BIRC3/c-IAP2. Ubiquitinated on Lys-209 via 'Lys-63'-linked by ITCH. Undergoes 'Lys-63'-linked deubiquitination by MYSM1 to attenuate NOD2-mediated inflammation and tissue damage. Polyubiquitinated with 'Lys-63'-linked chains in response to Shigella infection, promoting its SQSTM1/p62-dependent autophagic degradation. Undergoes 'Met-1'-linked polyubiquitination; the head-to-tail linear polyubiquitination is mediated by the LUBAC complex in response to NOD2 stimulation 'Met-1'-linked polyubiquitination. 'Lys-63'-linked polyubiquitination by XIAP is required for recruimtent of the LUBAC complex and subsequent. Linear polyubiquitination is restricted by FAM105B/otulin, probably to limit NOD2-dependent pro-inflammatory signaling activation of NF-kappa-B. Post-translationally, autophosphorylated. Phosphorylated at Ser-176, either via autophosphorylation or by LRRK2, enhancing activity. Autophosphorylation at Tyr-472 is required for effective NOD2 signaling. Autophosphorylation is however not essential for NOD2 signaling. Degraded via selective autophagy following interaction with IRGM. IRGM promotes NOD1/NOD2-RIPK2 RIPosome recruitment to autophagosome membranes. RIPK2 biquitinated via 'Lys-63'-linked chains is then recognized by SQSTM1/p62, leading to the SQSTM1/p62-dependent autophagic degradation of the NOD1/NOD2-RIPK2 RIPosome.

The protein localises to the cytoplasm. It localises to the cell membrane. It is found in the endoplasmic reticulum. The enzyme catalyses L-seryl-[protein] + ATP = O-phospho-L-seryl-[protein] + ADP + H(+). It catalyses the reaction L-threonyl-[protein] + ATP = O-phospho-L-threonyl-[protein] + ADP + H(+). It carries out the reaction L-tyrosyl-[protein] + ATP = O-phospho-L-tyrosyl-[protein] + ADP + H(+). With respect to regulation, in the inactive state, the helix alphaC is packed against the helical, non-phosphorylated activation segment (AS). Upon activation, helix alphaC is displaced and the phosphorylated AS becomes disordered. Functionally, serine/threonine/tyrosine-protein kinase that plays an essential role in modulation of innate and adaptive immune responses. Acts as a key effector of NOD1 and NOD2 signaling pathways: upon activation by bacterial peptidoglycans, NOD1 and NOD2 oligomerize and recruit RIPK2 via CARD-CARD domains, leading to the formation of RIPK2 filaments. Once recruited, RIPK2 autophosphorylates and undergoes 'Lys-63'-linked polyubiquitination by E3 ubiquitin ligases XIAP, BIRC2 and BIRC3, as well as 'Met-1'-linked (linear) polyubiquitination by the LUBAC complex, becoming a scaffolding protein for downstream effectors. 'Met-1'-linked polyubiquitin chains attached to RIPK2 recruit IKBKG/NEMO, which undergoes 'Lys-63'-linked polyubiquitination in a RIPK2-dependent process. 'Lys-63'-linked polyubiquitin chains attached to RIPK2 serve as docking sites for TAB2 and TAB3 and mediate the recruitment of MAP3K7/TAK1 to IKBKG/NEMO, inducing subsequent activation of IKBKB/IKKB. In turn, NF-kappa-B is released from NF-kappa-B inhibitors and translocates into the nucleus where it activates the transcription of hundreds of genes involved in immune response, growth control, or protection against apoptosis. The protein kinase activity is dispensable for the NOD1 and NOD2 signaling pathways. Contributes to the tyrosine phosphorylation of the guanine exchange factor ARHGEF2 through Src tyrosine kinase leading to NF-kappa-B activation by NOD2. Also involved in adaptive immunity: plays a role during engagement of the T-cell receptor (TCR) in promoting BCL10 phosphorylation and subsequent NF-kappa-B activation. Plays a role in the inactivation of RHOA in response to NGFR signaling. The polypeptide is Receptor-interacting serine/threonine-protein kinase 2 (RIPK2) (Bos taurus (Bovine)).